The sequence spans 1935 residues: Myosin-7 (1935 aa).

The Myosin N-terminal SH3-like domain maps to D32–P81. A Myosin motor domain is found at D85 to D778. Residue K129 is modified to N6,N6,N6-trimethyllysine. G178–T185 is a binding site for ATP. The residue at position 378 (T378) is a Phosphothreonine. 2 actin-binding regions span residues L655–E677 and R757–G771. The region spanning L781 to S810 is the IQ domain. Residues L839–E1935 are a coiled coil. A phosphoserine mark is found at S1137 and S1269. The residue at position 1282 (T1282) is a Phosphothreonine. Y1308 carries the post-translational modification Phosphotyrosine. Residue T1309 is modified to Phosphothreonine. S1510 bears the Phosphoserine mark. T1513 bears the Phosphothreonine mark. Residues E1907–E1935 form a disordered region. Residues K1923–E1935 are compositionally biased toward basic and acidic residues.

This sequence belongs to the TRAFAC class myosin-kinesin ATPase superfamily. Myosin family. As to quaternary structure, muscle myosin is a hexameric protein that consists of 2 heavy chain subunits (MHC), 2 alkali light chain subunits (MLC) and 2 regulatory light chain subunits (MLC-2). Interacts with ECPAS. Interacts (via C-terminus) with LRRC39.

Its subcellular location is the cytoplasm. The protein localises to the myofibril. The protein resides in the sarcomere. In terms of biological role, myosins are actin-based motor molecules with ATPase activity essential for muscle contraction. Forms regular bipolar thick filaments that, together with actin thin filaments, constitute the fundamental contractile unit of skeletal and cardiac muscle. The polypeptide is Myosin-7 (MYH7) (Equus caballus (Horse)).